A 538-amino-acid chain; its full sequence is Myeloid cell nuclear differentiation antigen-like protein (538 aa).

A Pyrin domain is found at 1–87; that stretch reads MAEYKKIVLL…AKKLKTEKAK (87 aa). Positions 120–306 are disordered; sequence SYKSVPSSKK…PQPQNQNIPR (187 aa). 2 stretches are compositionally biased toward basic and acidic residues: residues 135–153 and 245–262; these read AKTE…DHLP and RREE…KEPD. Residues 276 to 305 show a composition bias toward low complexity; sequence SPILHSSSSASSNIPSATNQKPQPQNQNIP. The HIN-200 domain maps to 299-499; it reads PQNQNIPRGA…CGDHSFVKIK (201 aa).

Belongs to the HIN-200 family. In terms of tissue distribution, highest expression observed in spleen and thymus with moderate levels in bone marrow, lung, skin and heart, low levels in muscle, liver and intestine and little or no expression in brain and pancreas.

It localises to the nucleus. Its function is as follows. Suppresses cell growth when expressed ectopically. The chain is Myeloid cell nuclear differentiation antigen-like protein from Mus musculus (Mouse).